The chain runs to 145 residues: Large ribosomal subunit protein uL14m (145 aa).

The transit peptide at 1-30 (MAALTGLWGSFAHVSRAFSQRCFSTSGSLS) directs the protein to the mitochondrion.

This sequence belongs to the universal ribosomal protein uL14 family. Component of the mitochondrial ribosome large subunit (39S) which comprises a 16S rRNA and about 50 distinct proteins. Interacts with MALSU1.

Its subcellular location is the mitochondrion. May form part of 2 intersubunit bridges in the assembled ribosome. Upon binding to MALSU1, intersubunit bridge formation is blocked, preventing ribosome formation and repressing translation. The polypeptide is Large ribosomal subunit protein uL14m (Mrpl14) (Mus musculus (Mouse)).